Here is a 120-residue protein sequence, read N- to C-terminus: Large ribosomal subunit protein eL18 (120 aa).

Belongs to the eukaryotic ribosomal protein eL18 family. In terms of assembly, part of the 50S ribosomal subunit.

The protein is Large ribosomal subunit protein eL18 of Pyrococcus furiosus (strain ATCC 43587 / DSM 3638 / JCM 8422 / Vc1).